The chain runs to 425 residues: Synaptotagmin-4 (425 aa).

Residues 1 to 16 (MAPITTSRVEFDEIPT) lie on the Vesicular side of the membrane. Residues 17-37 (VVGIFSAFGLVFTVSLFAWIC) form a helical membrane-spanning segment. Over 38–425 (CQRRSAKSNK…IAKWHMLCDG (388 aa)) the chain is Cytoplasmic. 2 disordered regions span residues 102–121 (NGNF…LENV) and 126–147 (FPET…SLTS). Residues 105 to 119 (FPKTNPKAGSSSDLE) show a composition bias toward polar residues. The residue at position 135 (S135) is a Phosphoserine; by MAPK8. The span at 137–146 (ESLKSSTSLT) shows a compositional bias: low complexity. C2 domains lie at 153-274 (KLGT…MLMT) and 287-420 (GRGE…AKWH). Residues D246, S249, and D252 each contribute to the Ca(2+) site.

It belongs to the synaptotagmin family. Interacts with KIF1A; the interaction increases in presence of calcium and decreases when SYT4 is phosphorylated at Ser-135. It depends on Ca(2+) as a cofactor. In terms of processing, phosphorylation at Ser-135 by MAPK8/JNK1 reduces interaction with KIF1A and neuronal dense core vesicles mobility. In terms of tissue distribution, widely expressed. Expressed in the brain. Expressed in pituitary gland, cerebellum, cortex, hypothalamus and hippocampus.

The protein localises to the cytoplasmic vesicle. Its subcellular location is the secretory vesicle. It localises to the neuronal dense core vesicle membrane. Functionally, synaptotagmin family member which does not bind Ca(2+). Involved in neuronal dense core vesicles (DCVs) mobility through its interaction with KIF1A. Upon increased neuronal activity, phosphorylation by MAPK8/JNK1 destabilizes the interaction with KIF1A and captures DCVs to synapses. Plays a role in dendrite formation by melanocytes. The chain is Synaptotagmin-4 (Syt4) from Rattus norvegicus (Rat).